A 550-amino-acid polypeptide reads, in one-letter code: Membrane protein insertase YidC (550 aa).

Residues 3–23 traverse the membrane as a helical segment; sequence IKRTVLWVIFFMSAVMLFDNW. A disordered region spans residues 34–73; sequence FPSATQTKTAAPAAPGSSTTASQPTDLPQTTAAAPGSTTP. The segment covering 35-73 has biased composition (low complexity); it reads PSATQTKTAAPAAPGSSTTASQPTDLPQTTAAAPGSTTP. 4 consecutive transmembrane segments (helical) span residues 363–383, 429–449, 472–492, and 503–523; these read WGWA…PLSA, FGGC…YWVL, PYFI…KLNP, and MMFM…GLVL.

This sequence belongs to the OXA1/ALB3/YidC family. Type 1 subfamily. Interacts with the Sec translocase complex via SecD. Specifically interacts with transmembrane segments of nascent integral membrane proteins during membrane integration.

It localises to the cell inner membrane. Required for the insertion and/or proper folding and/or complex formation of integral membrane proteins into the membrane. Involved in integration of membrane proteins that insert both dependently and independently of the Sec translocase complex, as well as at least some lipoproteins. Aids folding of multispanning membrane proteins. This chain is Membrane protein insertase YidC, found in Paraburkholderia phymatum (strain DSM 17167 / CIP 108236 / LMG 21445 / STM815) (Burkholderia phymatum).